A 642-amino-acid chain; its full sequence is Transcription factor 4 (642 aa).

Over residues methionine 1–asparagine 25 the composition is skewed to polar residues. Residues methionine 1–arginine 59 form an essential for MYOD1 inhibition region. 4 disordered regions span residues methionine 1–glycine 296, histidine 311–leucine 354, proline 444–asparagine 545, and lysine 609–methionine 642. Phosphoserine occurs at positions 42, 63, and 68. Composition is skewed to polar residues over residues glycine 83–histidine 98, glycine 112–asparagine 130, proline 181–phenylalanine 191, glycine 218–cysteine 230, and proline 241–isoleucine 281. The segment covering threonine 312 to proline 323 has biased composition (low complexity). Polar residues predominate over residues asparagine 340–asparagine 349. Residue serine 347 is modified to Phosphoserine. The leucine-zipper stretch occupies residues leucine 354–leucine 375. Low complexity-rich tracts occupy residues proline 444–glutamine 455 and glycine 478–glutamate 487. Phosphoserine is present on serine 490. Basic and acidic residues-rich tracts occupy residues lysine 502–lysine 517 and proline 530–asparagine 545. The bHLH domain maps to glutamate 539–leucine 592. Residues glutamine 594–serine 617 are class A specific domain.

As to quaternary structure, efficient DNA binding requires dimerization with another bHLH protein. Forms homo- or heterooligomers with myogenin. Interacts with HIVEP2. Interacts with NEUROD2. Interacts with AGBL1. Widely expressed.

It localises to the nucleus. Its function is as follows. Transcription factor that binds to the immunoglobulin enhancer Mu-E5/KE5-motif. Involved in the initiation of neuronal differentiation. Activates transcription by binding to the E box (5'-CANNTG-3'). Binds to the thyroglobulin promoter. This chain is Transcription factor 4 (TCF4), found in Canis lupus familiaris (Dog).